Reading from the N-terminus, the 416-residue chain is Glutamyl-tRNA reductase (416 aa).

Substrate is bound by residues Thr50 to Arg53, Ser109, Glu114 to Gln116, and Gln120. The active-site Nucleophile is the Cys51. Gly189–Ile194 contributes to the NADP(+) binding site.

It belongs to the glutamyl-tRNA reductase family. Homodimer.

The enzyme catalyses (S)-4-amino-5-oxopentanoate + tRNA(Glu) + NADP(+) = L-glutamyl-tRNA(Glu) + NADPH + H(+). It participates in porphyrin-containing compound metabolism; protoporphyrin-IX biosynthesis; 5-aminolevulinate from L-glutamyl-tRNA(Glu): step 1/2. Functionally, catalyzes the NADPH-dependent reduction of glutamyl-tRNA(Glu) to glutamate 1-semialdehyde (GSA). This is Glutamyl-tRNA reductase from Vesicomyosocius okutanii subsp. Calyptogena okutanii (strain HA).